The chain runs to 109 residues: Iron-sulfur cluster assembly protein CyaY (109 aa).

The protein belongs to the frataxin family.

Functionally, involved in iron-sulfur (Fe-S) cluster assembly. May act as a regulator of Fe-S biogenesis. The sequence is that of Iron-sulfur cluster assembly protein CyaY from Acidovorax ebreus (strain TPSY) (Diaphorobacter sp. (strain TPSY)).